The following is a 408-amino-acid chain: 1-deoxy-D-xylulose 5-phosphate reductoisomerase (408 aa).

NADPH contacts are provided by Thr-27, Gly-28, Ser-29, Ile-30, Ala-53, Arg-54, Asn-55, and Asn-140. Lys-141 lines the 1-deoxy-D-xylulose 5-phosphate pocket. Glu-142 serves as a coordination point for NADPH. Asp-166 is a Mn(2+) binding site. 1-deoxy-D-xylulose 5-phosphate-binding residues include Ser-167, Glu-168, Ser-192, and His-215. Glu-168 is a Mn(2+) binding site. Gly-221 contacts NADPH. 1-deoxy-D-xylulose 5-phosphate contacts are provided by Ser-228, Asn-233, Lys-234, and Glu-237. Glu-237 contacts Mn(2+).

It belongs to the DXR family. Requires Mg(2+) as cofactor. Mn(2+) serves as cofactor.

The catalysed reaction is 2-C-methyl-D-erythritol 4-phosphate + NADP(+) = 1-deoxy-D-xylulose 5-phosphate + NADPH + H(+). It participates in isoprenoid biosynthesis; isopentenyl diphosphate biosynthesis via DXP pathway; isopentenyl diphosphate from 1-deoxy-D-xylulose 5-phosphate: step 1/6. In terms of biological role, catalyzes the NADPH-dependent rearrangement and reduction of 1-deoxy-D-xylulose-5-phosphate (DXP) to 2-C-methyl-D-erythritol 4-phosphate (MEP). This chain is 1-deoxy-D-xylulose 5-phosphate reductoisomerase, found in Nitratidesulfovibrio vulgaris (strain ATCC 29579 / DSM 644 / CCUG 34227 / NCIMB 8303 / VKM B-1760 / Hildenborough) (Desulfovibrio vulgaris).